Reading from the N-terminus, the 175-residue chain is Protein ppBat (175 aa).

Zn(2+) contacts are provided by Cys74 and Cys111. Residues Asn161 and Trp164 each coordinate riboflavin.

In terms of assembly, homodimer.

Its function is as follows. Binds flavin derivatives, such as lumichrome, riboflavin, FMN, and FAD. May act as a flavin storage protein. Appears to lack proteolytic or chaperone activities. This Bacteroides thetaiotaomicron (strain ATCC 29148 / DSM 2079 / JCM 5827 / CCUG 10774 / NCTC 10582 / VPI-5482 / E50) protein is Protein ppBat.